A 394-amino-acid chain; its full sequence is Phosphoglycerate kinase (394 aa).

Substrate contacts are provided by residues 21–23 (DLN), Arg-36, 60–63 (HLGN), Arg-114, and Arg-147. ATP is bound by residues Lys-198, Glu-315, and 341–344 (GGET).

This sequence belongs to the phosphoglycerate kinase family. Monomer.

It localises to the cytoplasm. The catalysed reaction is (2R)-3-phosphoglycerate + ATP = (2R)-3-phospho-glyceroyl phosphate + ADP. It functions in the pathway carbohydrate degradation; glycolysis; pyruvate from D-glyceraldehyde 3-phosphate: step 2/5. The sequence is that of Phosphoglycerate kinase from Wigglesworthia glossinidia brevipalpis.